We begin with the raw amino-acid sequence, 57 residues long: UPF0391 membrane protein bsl6560 (57 aa).

The next 2 helical transmembrane spans lie at tryptophan 4–alanine 24 and isoleucine 30–leucine 50.

Belongs to the UPF0391 family.

It is found in the cell membrane. The polypeptide is UPF0391 membrane protein bsl6560 (Bradyrhizobium diazoefficiens (strain JCM 10833 / BCRC 13528 / IAM 13628 / NBRC 14792 / USDA 110)).